The following is an 84-amino-acid chain: Cell division topological specificity factor (84 aa).

Belongs to the MinE family.

Functionally, prevents the cell division inhibition by proteins MinC and MinD at internal division sites while permitting inhibition at polar sites. This ensures cell division at the proper site by restricting the formation of a division septum at the midpoint of the long axis of the cell. This Paraburkholderia phymatum (strain DSM 17167 / CIP 108236 / LMG 21445 / STM815) (Burkholderia phymatum) protein is Cell division topological specificity factor.